Consider the following 349-residue polypeptide: Holliday junction branch migration complex subunit RuvB (349 aa).

Residues 1–15 (MSDDYRETDPTRQPE) are compositionally biased toward basic and acidic residues. A disordered region spans residues 1–25 (MSDDYRETDPTRQPEDMGEGSLRPE). Residues 1-183 (MSDDYRETDP…FGIPLRLVFY (183 aa)) are large ATPase domain (RuvB-L). Residues Leu-22, Arg-23, Gly-64, Lys-67, Thr-68, Thr-69, 130–132 (EDF), Arg-173, Tyr-183, and Arg-220 each bind ATP. Position 68 (Thr-68) interacts with Mg(2+). The tract at residues 184 to 254 (TPEELRAIVS…LADAALGRLE (71 aa)) is small ATPAse domain (RuvB-S). The segment at 257–349 (ERGLDAMDRR…SSLEQDDSAP (93 aa)) is head domain (RuvB-H). DNA contacts are provided by Arg-293, Arg-312, and Arg-317.

It belongs to the RuvB family. In terms of assembly, homohexamer. Forms an RuvA(8)-RuvB(12)-Holliday junction (HJ) complex. HJ DNA is sandwiched between 2 RuvA tetramers; dsDNA enters through RuvA and exits via RuvB. An RuvB hexamer assembles on each DNA strand where it exits the tetramer. Each RuvB hexamer is contacted by two RuvA subunits (via domain III) on 2 adjacent RuvB subunits; this complex drives branch migration. In the full resolvosome a probable DNA-RuvA(4)-RuvB(12)-RuvC(2) complex forms which resolves the HJ.

The protein resides in the cytoplasm. The enzyme catalyses ATP + H2O = ADP + phosphate + H(+). Functionally, the RuvA-RuvB-RuvC complex processes Holliday junction (HJ) DNA during genetic recombination and DNA repair, while the RuvA-RuvB complex plays an important role in the rescue of blocked DNA replication forks via replication fork reversal (RFR). RuvA specifically binds to HJ cruciform DNA, conferring on it an open structure. The RuvB hexamer acts as an ATP-dependent pump, pulling dsDNA into and through the RuvAB complex. RuvB forms 2 homohexamers on either side of HJ DNA bound by 1 or 2 RuvA tetramers; 4 subunits per hexamer contact DNA at a time. Coordinated motions by a converter formed by DNA-disengaged RuvB subunits stimulates ATP hydrolysis and nucleotide exchange. Immobilization of the converter enables RuvB to convert the ATP-contained energy into a lever motion, pulling 2 nucleotides of DNA out of the RuvA tetramer per ATP hydrolyzed, thus driving DNA branch migration. The RuvB motors rotate together with the DNA substrate, which together with the progressing nucleotide cycle form the mechanistic basis for DNA recombination by continuous HJ branch migration. Branch migration allows RuvC to scan DNA until it finds its consensus sequence, where it cleaves and resolves cruciform DNA. The sequence is that of Holliday junction branch migration complex subunit RuvB from Gluconobacter oxydans (strain 621H) (Gluconobacter suboxydans).